A 469-amino-acid chain; its full sequence is Glutamine synthetase (469 aa).

Positions 15–96 (EDVKFIDVRF…INFFIHDPIT (82 aa)) constitute a GS beta-grasp domain. Positions 104-469 (PRNVAKKAEA…PYEYEQYYDV (366 aa)) constitute a GS catalytic domain. 2 residues coordinate Mg(2+): glutamate 129 and glutamate 131. Glutamate 205 provides a ligand contact to ATP. Mg(2+)-binding residues include glutamate 210 and glutamate 218. An ATP-binding site is contributed by 221 to 223 (YKF). L-glutamate is bound by residues 262–263 (NG) and glycine 263. Histidine 267 contacts Mg(2+). ATP is bound by residues 269–271 (HQS) and serine 271. Residues arginine 320, glutamate 326, and arginine 338 each coordinate L-glutamate. ATP contacts are provided by arginine 338, arginine 343, and lysine 352. Glutamate 357 provides a ligand contact to Mg(2+). Residue arginine 359 coordinates L-glutamate. An O-AMP-tyrosine modification is found at tyrosine 397.

It belongs to the glutamine synthetase family. In terms of assembly, oligomer of 12 subunits arranged in the form of two hexagons. Mg(2+) is required as a cofactor.

It is found in the cytoplasm. It catalyses the reaction L-glutamate + NH4(+) + ATP = L-glutamine + ADP + phosphate + H(+). With respect to regulation, the activity of this enzyme could be controlled by adenylation under conditions of abundant glutamine. Functionally, catalyzes the ATP-dependent biosynthesis of glutamine from glutamate and ammonia. The sequence is that of Glutamine synthetase from Streptomyces viridochromogenes.